The following is a 532-amino-acid chain: Collagen alpha-1(XXIII) chain (532 aa).

Over 1–23 (MGAGERAAGGGGTQDPGAGCGAR) the chain is Cytoplasmic. The helical; Signal-anchor for type II membrane protein transmembrane segment at 24 to 45 (ALGALCLLLSVGSATACLLLGA) threads the bilayer. Residues 46-532 (QAAALHGRVA…GLPVPGCWHK (487 aa)) are Extracellular-facing. A disordered region spans residues 102–532 (PSECICPPGP…GLPVPGCWHK (431 aa)). Collagen-like domains lie at 108–163 (PPGP…FGPR), 173–232 (GPPG…PGKK), 242–297 (GLPG…EQGD), and 313–372 (GPPG…MGLS). Low complexity-rich tracts occupy residues 129–145 (QSGR…DGKP) and 157–172 (PGDF…DGAA). 3 stretches are compositionally biased toward pro residues: residues 174–184 (PPGPPGPPGAR), 241–250 (PGLPGPPGPK), and 314–326 (PPGP…PPGI). Composition is skewed to basic and acidic residues over residues 342-354 (DGEK…KGDP) and 380-393 (PKGE…DHLQ). Residues 403 to 414 (PGPPGPPGPPGP) are compositionally biased toward pro residues. Collagen-like domains follow at residues 404-452 (GPPG…GPPG) and 455-514 (GLPG…PGLD). Composition is skewed to basic and acidic residues over residues 427–441 (DGAK…ERGP) and 478–495 (RGEK…ERGV).

As to quaternary structure, homotrimer. In terms of processing, undergoes proteolytic cleavage by furin protease to yield a 60 kDa soluble form that forms a homotrimer and exhibits a low affinity interaction with heparin.

The protein resides in the cell membrane. In Rattus norvegicus (Rat), this protein is Collagen alpha-1(XXIII) chain (Col23a1).